The sequence spans 520 residues: 2,3-bisphosphoglycerate-independent phosphoglycerate mutase (520 aa).

Residues aspartate 13 and serine 63 each coordinate Mn(2+). Catalysis depends on serine 63, which acts as the Phosphoserine intermediate. Substrate is bound by residues histidine 124, 154–155 (RD), arginine 192, arginine 198, 268–271 (RADR), and lysine 342. Residues aspartate 409, histidine 413, aspartate 450, histidine 451, and histidine 469 each contribute to the Mn(2+) site.

This sequence belongs to the BPG-independent phosphoglycerate mutase family. As to quaternary structure, monomer. Mn(2+) serves as cofactor.

The enzyme catalyses (2R)-2-phosphoglycerate = (2R)-3-phosphoglycerate. The protein operates within carbohydrate degradation; glycolysis; pyruvate from D-glyceraldehyde 3-phosphate: step 3/5. Catalyzes the interconversion of 2-phosphoglycerate and 3-phosphoglycerate. The sequence is that of 2,3-bisphosphoglycerate-independent phosphoglycerate mutase from Colwellia psychrerythraea (strain 34H / ATCC BAA-681) (Vibrio psychroerythus).